A 484-amino-acid polypeptide reads, in one-letter code: Hexokinase-2 (484 aa).

Residues proline 21 to alanine 467 form the Hexokinase domain. A hexokinase small subdomain region spans residues threonine 75 to isoleucine 208. A hexokinase large subdomain region spans residues asparagine 209 to aspartate 456.

This sequence belongs to the hexokinase family. As to quaternary structure, monomer.

The protein localises to the cytoplasm. It carries out the reaction a D-hexose + ATP = a D-hexose 6-phosphate + ADP + H(+). It catalyses the reaction D-fructose + ATP = D-fructose 6-phosphate + ADP + H(+). The catalysed reaction is D-glucose + ATP = D-glucose 6-phosphate + ADP + H(+). It participates in carbohydrate metabolism; hexose metabolism. Its pathway is carbohydrate degradation; glycolysis; D-glyceraldehyde 3-phosphate and glycerone phosphate from D-glucose: step 1/4. In terms of biological role, catalyzes the phosphorylation of hexose, such as D-glucose and D-fructose, to hexose 6-phosphate (D-glucose 6-phosphate and D-fructose 6-phosphate, respectively). Mediates the initial step of glycolysis by catalyzing phosphorylation of D-glucose to D-glucose 6-phosphate. This is Hexokinase-2 (HXK2) from Candida albicans (strain SC5314 / ATCC MYA-2876) (Yeast).